The sequence spans 50 residues: Bacterioferritin (50 aa).

The region spanning 1 to 50 is the Ferritin-like diiron domain; sequence MKGDPKVIDYLNKALRHELTAINQYWLHYRLLDNWGIKDLAKKWRAESIE. Glutamate 18 contributes to the Fe cation binding site.

The protein belongs to the bacterioferritin family. Homooligomer of 24 subunits, arranged as 12 dimers, that are packed together to form an approximately spherical molecule with a central cavity, in which large amounts of iron can be deposited. Heme b serves as cofactor.

It carries out the reaction 4 Fe(2+) + O2 + 4 H(+) = 4 Fe(3+) + 2 H2O. It catalyses the reaction Fe(2+)(in) = Fe(2+)(out). In terms of biological role, iron-storage protein, whose ferroxidase center binds Fe(2+), oxidizes it using dioxygen to Fe(3+), and participates in the subsequent Fe(3+) oxide mineral core formation within the central cavity of the BFR protein shell. Its function is as follows. May act as one of the electron carriers in the reverse electron-transport system from cytochrome c-552 to NADP(+). This Nitrobacter winogradskyi (Nitrobacter agilis) protein is Bacterioferritin (bfr).